The sequence spans 149 residues: Protein RhiC (149 aa).

The first 23 residues, 1-23, serve as a signal peptide directing secretion; it reads MTATLRAFGWLAAFALTVTFAQG.

Its subcellular location is the periplasm. Functionally, may be involved in plant-microbe interaction. The protein is Protein RhiC (rhiC) of Rhizobium leguminosarum bv. viciae.